A 179-amino-acid polypeptide reads, in one-letter code: uncharacterized protein (179 aa).

Residues 1–10 show a composition bias toward polar residues; the sequence is ATLSAGQPAS. Disordered regions lie at residues 1–35, 59–80, and 131–179; these read ATLSAGQPASLTEAEPNTEKATLHRHPAPKRRGKC, VRRNSRRSEPLSGSQPRPPIVT, and ECPT…STCR. Basic residues predominate over residues 23–33; the sequence is LHRHPAPKRRG. Over residues 149–158 the composition is skewed to basic residues; the sequence is TPSRVRRSRR.

This is an uncharacterized protein from Human cytomegalovirus (strain AD169) (HHV-5).